The following is a 344-amino-acid chain: L-erythro-3,5-diaminohexanoate dehydrogenase (344 aa).

It belongs to the KDD family. As to quaternary structure, homodimer.

It carries out the reaction (3S,5S)-3,5-diaminohexanoate + NAD(+) + H2O = (5S)-5-amino-3-oxohexanoate + NH4(+) + NADH + H(+). The protein operates within amino-acid degradation; L-lysine degradation via acetate pathway. Its function is as follows. Involved in the anaerobic fermentation of lysine. Catalyzes the oxidative deamination of L-erythro-3,5-diaminohexanoate (3,5-DAH) to 3-keto-5-aminohexanoate (KAH). The protein is L-erythro-3,5-diaminohexanoate dehydrogenase of Acetoanaerobium sticklandii (strain ATCC 12662 / DSM 519 / JCM 1433 / CCUG 9281 / NCIMB 10654 / HF) (Clostridium sticklandii).